Here is a 376-residue protein sequence, read N- to C-terminus: D-alanine--D-alanine ligase (376 aa).

Residues Lys-153–Gln-366 form the ATP-grasp domain. Val-185–Glu-240 is a binding site for ATP. Mg(2+) contacts are provided by Asp-317, Glu-333, and Asn-335.

This sequence belongs to the D-alanine--D-alanine ligase family. The cofactor is Mg(2+). Mn(2+) serves as cofactor.

The protein localises to the cytoplasm. It carries out the reaction 2 D-alanine + ATP = D-alanyl-D-alanine + ADP + phosphate + H(+). Its pathway is cell wall biogenesis; peptidoglycan biosynthesis. Cell wall formation. The polypeptide is D-alanine--D-alanine ligase (Kineococcus radiotolerans (strain ATCC BAA-149 / DSM 14245 / SRS30216)).